Reading from the N-terminus, the 907-residue chain is Protein translocase subunit SecA (907 aa).

ATP is bound by residues glutamine 87, 105–109 (GEGKT), and aspartate 512. 4 residues coordinate Zn(2+): cysteine 891, cysteine 893, cysteine 902, and histidine 903.

It belongs to the SecA family. As to quaternary structure, monomer and homodimer. Part of the essential Sec protein translocation apparatus which comprises SecA, SecYEG and auxiliary proteins SecDF-YajC and YidC. Requires Zn(2+) as cofactor.

It is found in the cell inner membrane. The protein resides in the cytoplasm. It carries out the reaction ATP + H2O + cellular proteinSide 1 = ADP + phosphate + cellular proteinSide 2.. Functionally, part of the Sec protein translocase complex. Interacts with the SecYEG preprotein conducting channel. Has a central role in coupling the hydrolysis of ATP to the transfer of proteins into and across the cell membrane, serving both as a receptor for the preprotein-SecB complex and as an ATP-driven molecular motor driving the stepwise translocation of polypeptide chains across the membrane. This chain is Protein translocase subunit SecA, found in Shewanella loihica (strain ATCC BAA-1088 / PV-4).